A 344-amino-acid polypeptide reads, in one-letter code: Fructose-1,6-bisphosphatase, cytosolic (344 aa).

Residues glutamate 71, glutamate 100, aspartate 121, leucine 123, and aspartate 124 each contribute to the Mg(2+) site. Substrate is bound by residues 124-127 (DGSS), asparagine 215, tyrosine 247, tyrosine 267, and lysine 277. Glutamate 283 contributes to the Mg(2+) binding site.

Belongs to the FBPase class 1 family. Mg(2+) serves as cofactor.

It is found in the cytoplasm. The enzyme catalyses beta-D-fructose 1,6-bisphosphate + H2O = beta-D-fructose 6-phosphate + phosphate. This Oryza coarctata (Wild rice) protein is Fructose-1,6-bisphosphatase, cytosolic.